A 94-amino-acid chain; its full sequence is Non-specific lipid-transfer protein 1 (94 aa).

Cystine bridges form between C4–C53, C14–C30, C31–C76, and C51–C90.

In terms of biological role, plant non-specific lipid-transfer proteins transfer phospholipids as well as galactolipids across membranes. May play a role in wax or cutin deposition in the cell walls of expanding epidermal cells and certain secretory tissues. This chain is Non-specific lipid-transfer protein 1, found in Amaranthus hypochondriacus (Prince-of-Wales feather).